We begin with the raw amino-acid sequence, 180 residues long: 2-oxoglutarate dehydrogenase, mitochondrial (180 aa).

Position 14 is an N6-succinyllysine (Lys-14). Ser-40 carries the post-translational modification Phosphoserine. Position 64 (Arg-64) interacts with thiamine diphosphate.

It belongs to the alpha-ketoglutarate dehydrogenase family. Homodimer. The 2-oxoglutarate dehydrogenase complex is composed of OGDH (2-oxoglutarate dehydrogenase; E1), DLST (dihydrolipoamide succinyltransferase; E2) and DLD (dihydrolipoamide dehydrogenase; E3). It contains multiple copies of the three enzymatic components (E1, E2 and E3). In the nucleus, the 2-oxoglutarate dehydrogenase complex associates with KAT2A. Interacts with ABHD11; this interaction maintains the functional lipoylation of the 2-oxoglutarate dehydrogenase complex. Thiamine diphosphate is required as a cofactor. Mg(2+) serves as cofactor.

Its subcellular location is the mitochondrion matrix. It localises to the nucleus. The catalysed reaction is N(6)-[(R)-lipoyl]-L-lysyl-[protein] + 2-oxoglutarate + H(+) = N(6)-[(R)-S(8)-succinyldihydrolipoyl]-L-lysyl-[protein] + CO2. Calcium ions and ADP stimulate, whereas ATP and NADH reduce catalytic activity. 2-oxoglutarate dehydrogenase (E1) component of the 2-oxoglutarate dehydrogenase complex (OGDHC), which mediates the decarboxylation of alpha-ketoglutarate. The 2-oxoglutarate dehydrogenase complex catalyzes the overall conversion of 2-oxoglutarate to succinyl-CoA and CO(2). The 2-oxoglutarate dehydrogenase complex is mainly active in the mitochondrion. A fraction of the 2-oxoglutarate dehydrogenase complex also localizes in the nucleus and is required for lysine succinylation of histones: associates with KAT2A on chromatin and provides succinyl-CoA to histone succinyltransferase KAT2A. This Mesocricetus auratus (Golden hamster) protein is 2-oxoglutarate dehydrogenase, mitochondrial.